A 407-amino-acid polypeptide reads, in one-letter code: Zinc finger protein 174 (407 aa).

Positions 1-20 (MAAKMEITLSSNTEASSKQE) are disordered. Lys-26 participates in a covalent cross-link: Glycyl lysine isopeptide (Lys-Gly) (interchain with G-Cter in SUMO2). Residues 59–124 (GPQEALSQLR…KEIVTLVEDF (66 aa)) enclose the SCAN box domain. Residues 150–270 (GSQLGEQELP…RRQVSSPNAQ (121 aa)) are disordered. Lys-204 is covalently cross-linked (Glycyl lysine isopeptide (Lys-Gly) (interchain with G-Cter in SUMO2)). Residues 211–221 (PRMRSDNKENP) are compositionally biased toward basic and acidic residues. Residues Lys-230 and Lys-271 each participate in a glycyl lysine isopeptide (Lys-Gly) (interchain with G-Cter in SUMO2) cross-link. 3 C2H2-type zinc fingers span residues 326–348 (YKCDDCGKSFTWNSELKRHKRVH), 354–376 (YTCGECGNCFGRQSTLKLHQRIH), and 382–405 (YQCGQCGKSFRQSSNLHQHHRLHH).

This sequence belongs to the krueppel C2H2-type zinc-finger protein family. In terms of assembly, homodimer. Expressed in a variety of organs, but most strongly in adult testis and ovary followed by small intestine, colon, prostate, thymus, spleen, pancreas, skeletal muscle, heart, brain and kidney. Also expressed in umbilical vein endothelial cells, foreskin fibroblast and Hep-G2 cells.

The protein localises to the nucleus. Its function is as follows. Transcriptional repressor. This chain is Zinc finger protein 174 (ZNF174), found in Homo sapiens (Human).